The primary structure comprises 314 residues: Galectin-12 (314 aa).

2 consecutive Galectin domains span residues 27 to 161 (YGTT…VGFL) and 190 to 314 (CSRA…CVHC).

The protein localises to the nucleus. In terms of biological role, binds lactose. May participate in the apoptosis of adipocytes. In Mus musculus (Mouse), this protein is Galectin-12 (Lgals12).